The following is a 425-amino-acid chain: Glutamate-1-semialdehyde 2,1-aminomutase (425 aa).

Lys-265 carries the post-translational modification N6-(pyridoxal phosphate)lysine.

Belongs to the class-III pyridoxal-phosphate-dependent aminotransferase family. HemL subfamily. As to quaternary structure, homodimer. Pyridoxal 5'-phosphate serves as cofactor.

Its subcellular location is the cytoplasm. It catalyses the reaction (S)-4-amino-5-oxopentanoate = 5-aminolevulinate. It functions in the pathway porphyrin-containing compound metabolism; protoporphyrin-IX biosynthesis; 5-aminolevulinate from L-glutamyl-tRNA(Glu): step 2/2. The chain is Glutamate-1-semialdehyde 2,1-aminomutase from Thiobacillus denitrificans (strain ATCC 25259 / T1).